We begin with the raw amino-acid sequence, 302 residues long: Recombination-associated protein RdgC (302 aa).

The protein belongs to the RdgC family.

The protein localises to the cytoplasm. It localises to the nucleoid. Functionally, may be involved in recombination. This chain is Recombination-associated protein RdgC, found in Xylella fastidiosa (strain M12).